A 426-amino-acid polypeptide reads, in one-letter code: MASMSFALNRFSGLSSKTTLSADFDPSSRRSFLPPTRVGLKISSAAESEPDLSVTVNGLKMPNPFVIGSGPPGTNYTVMKRAFDEGWGAVIAKTVSLDASKVINVTPRYARLRTGSNGSAKTDVIGWQNIELISDRPLETMLKEFERLKKEYPDRILIASVMEEYNKTAWEELIDRVEQTGVDALEINFSCPHGMPERRMGAAVGQDCALLDEVCGWINAKATVPVWAKMTPNITDITEPARVSLKSGCEGIAAINTIMSVMGIDMKTLRPEPCVEGYSTPGGYSYKAVRPIALAKVMNIAKMMKSEFSEDRSLSGIGGVETGYDAAEFILLGSNTVQVCTGVMMHGYGHVKTLCAELKDFMKQHNFSTIEEFRGHSLQYFTTHTDLVKRQKEAVEQRKAEKRGLKSDKDWTGDGFVKETESMVSN.

Residues methionine 1–serine 44 constitute a chloroplast transit peptide. At alanine 45 the chain carries N-acetylalanine. Residues asparagine 129 and asparagine 188–serine 190 each bind substrate. The Nucleophile role is filled by cysteine 191. Asparagine 256–threonine 257 contacts substrate. The interval valine 395–aspartate 414 is disordered.

The protein belongs to the dihydropyrimidine dehydrogenase family. As to expression, expressed in roots, leaves, stems, siliques and flowers. Highly expressed ion dry seeds.

It is found in the plastid. It localises to the chloroplast. It carries out the reaction 5,6-dihydrouracil + NADP(+) = uracil + NADPH + H(+). The protein operates within amino-acid biosynthesis; beta-alanine biosynthesis. In terms of biological role, involved in pyrimidine base degradation. Catalyzes the reduction of uracil to 5,6-dihydrouracil (DHU) by using NADH as a specific cosubstrate and the reduction of thymine to 5,6-dihydrothymine (DHT). Involved in the recycling of nitrogen from nucleobases to general nitrogen metabolism. This is Dihydropyrimidine dehydrogenase (NADP(+)), chloroplastic from Arabidopsis thaliana (Mouse-ear cress).